A 400-amino-acid chain; its full sequence is Argininosuccinate synthase (400 aa).

Residues 10 to 18 and A38 each bind ATP; that span reads AYSGGVDTS. Residue Y89 participates in L-citrulline binding. Residue G119 participates in ATP binding. T121, N125, and D126 together coordinate L-aspartate. N125 serves as a coordination point for L-citrulline. Residues R129, S177, S186, E262, and Y274 each coordinate L-citrulline.

The protein belongs to the argininosuccinate synthase family. Type 1 subfamily. In terms of assembly, homotetramer.

Its subcellular location is the cytoplasm. The enzyme catalyses L-citrulline + L-aspartate + ATP = 2-(N(omega)-L-arginino)succinate + AMP + diphosphate + H(+). It functions in the pathway amino-acid biosynthesis; L-arginine biosynthesis; L-arginine from L-ornithine and carbamoyl phosphate: step 2/3. The polypeptide is Argininosuccinate synthase (Synechococcus elongatus (strain ATCC 33912 / PCC 7942 / FACHB-805) (Anacystis nidulans R2)).